We begin with the raw amino-acid sequence, 116 residues long: Protein Rev (116 aa).

Phosphoserine; by host CK2 occurs at positions 5 and 8. A homomultimerization region spans residues 18–26 (LIKFLYQSN). Positions 23-49 (YQSNPPPNPEGTRQARRNRRRRWRERQ) are disordered. Residues 34 to 50 (TRQARRNRRRRWRERQR) carry the Nuclear localization signal and RNA-binding (RRE) motif. The span at 36-47 (QARRNRRRRWRE) shows a compositional bias: basic residues. Residues 73–84 (LQLPPLERLTLD) carry the Nuclear export signal and binding to XPO1 motif. Phosphoserine; by host is present on residues S92 and S99. The segment at 92–116 (SGTQGVGSPQILVESPTVLESGTKE) is disordered.

This sequence belongs to the HIV-1 REV protein family. In terms of assembly, homomultimer; when bound to the RRE. Multimeric assembly is essential for activity and may involve XPO1. Binds to human KPNB1, XPO1, TNPO1, RANBP5 and IPO7. Interacts with the viral Integrase. Interacts with human KHDRBS1. Interacts with human NAP1; this interaction decreases Rev multimerization and stimulates its activity. Interacts with human DEAD-box helicases DDX3 and DDX24; these interactions may serve for viral RNA export to the cytoplasm and packaging, respectively. Interacts with human PSIP1; this interaction may inhibit HIV-1 DNA integration by promoting dissociation of the Integrase-LEDGF/p75 complex. Post-translationally, asymmetrically arginine dimethylated at one site by host PRMT6. Methylation impairs the RNA-binding activity and export of viral RNA from the nucleus to the cytoplasm. Phosphorylated by protein kinase CK2. Presence of, and maybe binding to the N-terminus of the regulatory beta subunit of CK2 is necessary for CK2-mediated Rev's phosphorylation.

The protein resides in the host nucleus. It localises to the host nucleolus. Its subcellular location is the host cytoplasm. In terms of biological role, escorts unspliced or incompletely spliced viral pre-mRNAs (late transcripts) out of the nucleus of infected cells. These pre-mRNAs carry a recognition sequence called Rev responsive element (RRE) located in the env gene, that is not present in fully spliced viral mRNAs (early transcripts). This function is essential since most viral proteins are translated from unspliced or partially spliced pre-mRNAs which cannot exit the nucleus by the pathway used by fully processed cellular mRNAs. Rev itself is translated from a fully spliced mRNA that readily exits the nucleus. Rev's nuclear localization signal (NLS) binds directly to KPNB1/Importin beta-1 without previous binding to KPNA1/Importin alpha-1. KPNB1 binds to the GDP bound form of RAN (Ran-GDP) and targets Rev to the nucleus. In the nucleus, the conversion from Ran-GDP to Ran-GTP dissociates Rev from KPNB1 and allows Rev's binding to the RRE in viral pre-mRNAs. Rev multimerization on the RRE via cooperative assembly exposes its nuclear export signal (NES) to the surface. Rev can then form a complex with XPO1/CRM1 and Ran-GTP, leading to nuclear export of the complex. Conversion from Ran-GTP to Ran-GDP mediates dissociation of the Rev/RRE/XPO1/RAN complex, so that Rev can return to the nucleus for a subsequent round of export. Beside KPNB1, also seems to interact with TNPO1/Transportin-1, RANBP5/IPO5 and IPO7/RANBP7 for nuclear import. The nucleoporin-like HRB/RIP is an essential cofactor that probably indirectly interacts with Rev to release HIV RNAs from the perinuclear region to the cytoplasm. In Human immunodeficiency virus type 1 group M subtype B (isolate BRU/LAI) (HIV-1), this protein is Protein Rev.